Here is a 1153-residue protein sequence, read N- to C-terminus: PPi-type phosphoenolpyruvate carboxykinase 2 (1153 aa).

Positions 1085–1131 form a coiled coil; the sequence is RQKLEVAKLNKDLAYLNKTIAEKPRLVETLNKQIAAVKEELQYVSSE.

This sequence belongs to the PPi-type phosphoenolpyruvate carboxykinase family. In terms of assembly, monomer and trimer; forms heterotrimers with PEPCK1 and PEPCK3.

It is found in the cytoplasm. The protein localises to the cytosol. The enzyme catalyses oxaloacetate + diphosphate = phosphoenolpyruvate + phosphate + CO2. Functionally, inorganic pyrophosphate (PPi)-dependent phosphoenolpyruvate carboxykinase, which regulates the carbon flow of the central metabolism by fixing CO(2) to phosphoenolpyruvate to produce oxaloacetate. Can also produce pyruvate and diphosphate from phosphoenolpyruvate and phosphate. The protein is PPi-type phosphoenolpyruvate carboxykinase 2 of Entamoeba histolytica (strain ATCC 30459 / HM-1:IMSS / ABRM).